Reading from the N-terminus, the 188-residue chain is Abscisic acid receptor PYL8 (188 aa).

The START-like stretch occupies residues histidine 25–glutamate 176. Cysteine 32 and cysteine 157 form a disulfide bridge. An abscisate-binding site is contributed by lysine 61. Residue threonine 77 is modified to Phosphothreonine; by CARK1. The short motif at serine 85–alanine 89 is the Gate loop element. Abscisate contacts are provided by residues alanine 89–glutamate 94, arginine 116–serine 122, and glutamate 141. The Latch loop motif lies at histidine 115–leucine 117.

The protein belongs to the PYR/PYL/RCAR abscisic acid intracellular receptor family. As to quaternary structure, monomer. Homodimer. Binds ABA on one subunit only. interacts with ABI1 and HAB1, and possibly with other PP2Cs. Binds to CARs protein in an ABA-independent manner, both at the plasma membrane and in the nucleus. Interacts directly with CAR1 and CAR4. Interacts with MYB44, MYB73 and MYB77 in an ABA-independent manner. Interacts with DDA1. Interacts with CARK1 in the cytosol. Binds to ABI1 when phosphorylated by CARK1. Interacts with AIP1 in the nucleus. Post-translationally, phosphorylated by CARK1 especially in response to abscisic acid (ABA); this phosphorylation promotes its stability and inhibitory ability to ABI1. In terms of processing, ubiquitinated in DDA1- and CDD complex-dependent manner. Ubiquitination leads to its subsequent proteasomal degradation.

It localises to the cytoplasm. It is found in the cytosol. The protein localises to the nucleus. Its subcellular location is the cell membrane. In terms of biological role, receptor for abscisic acid (ABA) required for ABA-mediated responses such as stomatal closure and germination inhibition. Inhibits the activity of group-A protein phosphatases type 2C (PP2Cs) in an ABA-independent manner but more efficiently when activated by ABA. Confers enhanced sensitivity to ABA. Can be activated by both (-)-ABA and (+)-ABA. Mediates crosstalk between ABA and auxin signaling to regulate lateral root growth. Required for lateral root growth suppression by ABA. In response to auxin, promotes lateral root growth by enhancing MYB77-dependent transcription of the auxin-responsive gene IAA19. Enhances the abilities of MYB44 and MYB73 to activate IAA19 gene. This Arabidopsis thaliana (Mouse-ear cress) protein is Abscisic acid receptor PYL8.